An 86-amino-acid chain; its full sequence is Cell division topological specificity factor (86 aa).

The protein belongs to the MinE family.

Its function is as follows. Prevents the cell division inhibition by proteins MinC and MinD at internal division sites while permitting inhibition at polar sites. This ensures cell division at the proper site by restricting the formation of a division septum at the midpoint of the long axis of the cell. This is Cell division topological specificity factor from Aliivibrio salmonicida (strain LFI1238) (Vibrio salmonicida (strain LFI1238)).